Reading from the N-terminus, the 399-residue chain is MPKETPSKAAADALSDLEIKDSKSNLNKELETLREENRVKSDMLKEKLSKDAENHKAYLKSHQVHRHKLKEMEKEEPLLNEDKERTVLFPIKYHEIWQAYKRAEASFWTAEEIDLSKDIHDWNNRMNENERFFISRVLAFFAASDGIVNENLVENFSTEVQIPEAKSFYGFQIMIENIHSETYSLLIDTYIKDPKESEFLFNAIHTIPEIGEKAEWALRWIQDADALFGERLVAFASIEGVFFSGSFASIFWLKKRGMMPGLTFSNELICRDEGLHTDFACLLFAHLKNKPDPAIVEKIVTEAVEIEQRYFLDALPVALLGMNADLMNQYVEFVADRLLVAFGNKKYYKVENPFDFMENISLAGKTNFFEKRVSDYQKAGVMSKSTKQEAGAFTFNEDF.

Serine 15, serine 24, and serine 41 each carry phosphoserine. Residues aspartate 145, glutamate 176, and histidine 179 each coordinate Fe cation. Tyrosine 183 is an active-site residue. The Fe cation site is built by glutamate 239, glutamate 273, and histidine 276.

This sequence belongs to the ribonucleoside diphosphate reductase small chain family. Heterotetramer of two large (R1) and two small (R2) subunits. S.cerevisiae has two different R1 subunits (RNR1 and RNR3) and two different R2 subunits (RNR2 and RNR4). The functional form of the small subunits is a RNR2-RNR4 heterodimer, where RNR2 provides the iron-radical center and RNR4 is required for proper folding of RNR2 and assembly with the large subunits. Under normal growth conditions, the active form of the large subunits is a homodimer of the constitutively expressed RNR1. In damaged cells or cells arrested for DNA synthesis, the reductase consists of multiple species because of the association of the small subunits (RNR2-RNR4) with either the RNR1 homodimer or a heterodimer of RNR1 and the damage-inducible RNR3. Interacts with DIF1. It depends on Fe cation as a cofactor.

It localises to the nucleus. The catalysed reaction is a 2'-deoxyribonucleoside 5'-diphosphate + [thioredoxin]-disulfide + H2O = a ribonucleoside 5'-diphosphate + [thioredoxin]-dithiol. Functionally, provides the precursors necessary for DNA synthesis. Catalyzes the biosynthesis of deoxyribonucleotides from the corresponding ribonucleotides. RNR2 provides the diiron-tyrosyl radical center. The chain is Ribonucleoside-diphosphate reductase small chain 1 (RNR2) from Saccharomyces cerevisiae (strain ATCC 204508 / S288c) (Baker's yeast).